A 586-amino-acid polypeptide reads, in one-letter code: NudC domain-containing protein 1 (586 aa).

The segment at 259 to 278 is disordered; sequence KDQPESSEDEKMDEDNKREP. In terms of domain architecture, CS spans 275–364; that stretch reads KREPLYNWHQ…EPGSTWAELV (90 aa).

The protein resides in the cytoplasm. Its subcellular location is the nucleus. The protein is NudC domain-containing protein 1 of Xenopus tropicalis (Western clawed frog).